Consider the following 485-residue polypeptide: N-succinylglutamate 5-semialdehyde dehydrogenase (485 aa).

Position 220-225 (220-225) interacts with NAD(+); sequence GSANTG. Catalysis depends on residues glutamate 243 and cysteine 278.

Belongs to the aldehyde dehydrogenase family. AstD subfamily.

The enzyme catalyses N-succinyl-L-glutamate 5-semialdehyde + NAD(+) + H2O = N-succinyl-L-glutamate + NADH + 2 H(+). Its pathway is amino-acid degradation; L-arginine degradation via AST pathway; L-glutamate and succinate from L-arginine: step 4/5. Functionally, catalyzes the NAD-dependent reduction of succinylglutamate semialdehyde into succinylglutamate. This is N-succinylglutamate 5-semialdehyde dehydrogenase from Vibrio parahaemolyticus serotype O3:K6 (strain RIMD 2210633).